Reading from the N-terminus, the 522-residue chain is TNF receptor-associated factor 6 (522 aa).

The interaction with TAX1BP1 stretch occupies residues 1–354 (MSLLNCENSC…EAQQCNGIYI (354 aa)). Residues 70-109 (CPICLMALREAVQTPCGHRFCKACIIKSIRDAGHKCPVDN) form an RING-type zinc finger. Residue lysine 124 forms a Glycyl lysine isopeptide (Lys-Gly) (interchain with G-Cter in SUMO); alternate linkage. Lysine 124 is covalently cross-linked (Glycyl lysine isopeptide (Lys-Gly) (interchain with G-Cter in ubiquitin); alternate). Residue lysine 142 forms a Glycyl lysine isopeptide (Lys-Gly) (interchain with G-Cter in SUMO) linkage. 2 consecutive TRAF-type zinc fingers follow at residues 150–202 (DHQA…EDKE) and 203–259 (IHDQ…NHLA). Residues 288–348 (YISEVRNFQE…DKVAEIEAQQ (61 aa)) are a coiled coil. Lysine 319 is covalently cross-linked (Glycyl lysine isopeptide (Lys-Gly) (interchain with G-Cter in ubiquitin)). The MATH domain maps to 350–499 (NGIYIWKIGN…DDTLLVRCEV (150 aa)). Residues 355 to 522 (WKIGNFGMHL…FQPRSTDAGV (168 aa)) form an interaction with TANK region. A Glycyl lysine isopeptide (Lys-Gly) (interchain with G-Cter in SUMO) cross-link involves residue lysine 453.

It belongs to the TNF receptor-associated factor family. A subfamily. Homotrimer. Homooligomer. N-terminal region is dimeric while C-terminal region is trimeric; maybe providing a mode of oligomerization. Upon IL1B treatment, forms a complex with PELI1, IRAK1, IRAK4 and MYD88; this complex recruits MAP3K7/TAK1, TAB1 and TAB2 to mediate NF-kappa-B activation. Direct binding of SMAD6 to PELI1 prevents the complex formation and hence negatively regulates IL1R-TLR signaling and eventually NF-kappa-B-mediated gene expression. Binds to TNFRSF5/CD40 and TNFRSF11A/RANK. Associates with NGFR, TNFRSF17, IRAK2, IRAK3, RIPK2, MAP3K1, MAP3K5, MAP3K14, CSK, TRAF, TRAF-interacting protein TRIP and TNF receptor associated protein TDP2. Interacts with IL17R. Interacts with SQSTM1 bridging NTRK1 and NGFR. Forms a ternary complex with SQSTM1 and PRKCZ. Interacts with PELI2 and PELI3. Binds UBE2V1. Interacts with TAX1BP1; this interaction mediates deubiquitination of TRAF6 and inhibition of NF-kappa-B activation. Interacts with ZNF675. Interacts with ARRB1 and ARRB2. Interacts with MAP3K7 and TAB1/MAP3K7IP1; during IL-1 signaling. Interacts with UBE2N. Interacts with TGFBR1, HDAC1 and RANGAP1. Interacts with AKT1, AKT2 and AKT3. Interacts (via TRAF domains) with NUMBL (via C-terminal). Interacts with RBCK1. Interacts with LIMD1 (via LIM domains). Interacts with RSAD2/viperin. Interacts (via C-terminus) with EIF2AK2/PKR (via the kinase catalytic domain). Interacts with ZFAND5. Interacts with IL1RL1. Interacts with TRAFD1. Interacts with AJUBA. Interacts with MAVS/IPS1. Interacts (via TRAF domains) with DYNC2I2 (via WD domains). Interacts with IFIT3 (via N-terminus). Interacts with TICAM2. Interacts with CARD14. Interacts with CD40 and MAP3K8; the interaction is required for ERK activation. Interacts with TICAM1 and this interaction is enhanced in the presence of WDFY1. Interacts with TANK; this interaction increases in response to DNA damage. Interacts with USP10; this interaction increases in response to DNA damage. Interacts with ZC3H12A; this interaction increases in response to DNA damage and is stimulated by TANK. Interacts with WDFY3. Interacts with TRIM13. Interacts with GPS2. Interacts (via C-terminus) with SASH1. Interacts with LRRC19. Interacts with IL17RA and TRAF3IP2. Interacts with TOMM70. Interacts with AMBRA1; interaction is required to mediate 'Lys-63'-linked ubiquitination of ULK1. Interacts with CRBN; this interaction inhibits TLR4-mediated signaling by preventing TRAF6-mediated ubiquitination of ECSIT. Post-translationally, sumoylated on Lys-124, Lys-142 and Lys-453 with SUMO1. In terms of processing, polyubiquitinated on Lys-124 by TRAF3IP2; after cell stimulation with IL17A. Polyubiquitinated on Lys-124; after cell stimulation with IL1B or TGFB. This ligand-induced cell stimulation leads to dimerization/oligomerization of TRAF6 molecules, followed by auto-ubiquitination which involves UBE2N and UBE2V1 and leads to TRAF6 activation. This 'Lys-63' site-specific poly-ubiquitination appears to be associated with the activation of signaling molecules. Endogenous autoubiquitination occurs only for the cytoplasmic form. Deubiquitinated by USP10 in a TANK-dependent manner, leading to the negative regulation of NF-kappaB signaling upon DNA damage. LRRC19 induces 'Lys-63' ubiquitination. Ubiquitinated at Lys-319 by the SCF(FBXL2) complex, leading to its degradation by the proteasome. (Microbial infection) Deubiquitinated by Epstein-Barr virus BPLF1 on both 'Lys-48' and 'Lys-63'-linked ubiquitin chains; leading to NF-kappa-B signaling inhibition. Expressed in heart, brain, placenta, lung, liver, skeletal muscle, kidney and pancreas.

The protein resides in the cytoplasm. Its subcellular location is the cell cortex. It localises to the nucleus. It is found in the lipid droplet. It catalyses the reaction S-ubiquitinyl-[E2 ubiquitin-conjugating enzyme]-L-cysteine + [acceptor protein]-L-lysine = [E2 ubiquitin-conjugating enzyme]-L-cysteine + N(6)-ubiquitinyl-[acceptor protein]-L-lysine.. It functions in the pathway protein modification; protein ubiquitination. Its function is as follows. E3 ubiquitin ligase that, together with UBE2N and UBE2V1, mediates the synthesis of 'Lys-63'-linked-polyubiquitin chains conjugated to proteins, such as ECSIT, IKBKG, IRAK1, AKT1 and AKT2. Also mediates ubiquitination of free/unanchored polyubiquitin chain that leads to MAP3K7 activation. Leads to the activation of NF-kappa-B and JUN. Seems to also play a role in dendritic cells (DCs) maturation and/or activation. Represses c-Myb-mediated transactivation, in B-lymphocytes. Adapter protein that seems to play a role in signal transduction initiated via TNF receptor, IL-1 receptor and IL-17 receptor. Regulates osteoclast differentiation by mediating the activation of adapter protein complex 1 (AP-1) and NF-kappa-B, in response to RANK-L stimulation. Together with MAP3K8, mediates CD40 signals that activate ERK in B-cells and macrophages, and thus may play a role in the regulation of immunoglobulin production. Acts as a regulator of the JNK and NF-kappa-B signaling pathways by initiating assembly of heterotypic 'Lys-63'-/'Lys-48'-linked branched ubiquitin chains that are then recognized by TAB2: TRAF6 catalyzes initial 'Lys-63'-linked-polyubiquitin chains that are then branched via 'Lys-48'-linked polyubiquitin by HUWE1. 'Lys-63'-/'Lys-48'-linked branched ubiquitin chains protect 'Lys-63'-linkages from CYLD deubiquitination. Participates also in the TCR signaling by ubiquitinating LAT. This is TNF receptor-associated factor 6 (TRAF6) from Homo sapiens (Human).